Reading from the N-terminus, the 229-residue chain is Potassium/proton antiporter CemA (229 aa).

The next 4 membrane-spanning stretches (helical) occupy residues 7–27, 107–127, 154–174, and 189–209; these read FNPL…SFSF, ILNF…YILG, ILLL…ELMI, and IISG…KYLI.

This sequence belongs to the CemA family.

It is found in the plastid. It localises to the chloroplast inner membrane. The catalysed reaction is K(+)(in) + H(+)(out) = K(+)(out) + H(+)(in). In terms of biological role, contributes to K(+)/H(+) antiport activity by supporting proton efflux to control proton extrusion and homeostasis in chloroplasts in a light-dependent manner to modulate photosynthesis. Prevents excessive induction of non-photochemical quenching (NPQ) under continuous-light conditions. Indirectly promotes efficient inorganic carbon uptake into chloroplasts. This is Potassium/proton antiporter CemA from Ranunculus macranthus (Large buttercup).